The sequence spans 222 residues: MMEGYYIIENPGVVPAERRFRMKDLKAWGYDLHLGTIEGERAYFVSKVGERREGEKYQVGGKEYYIEETQKDIPGNARLLARIVIERGNPYLEFWLEEEDTKFPLAKEDPRIILKRIWEKEKLNQLLKHVRAIGLTTDFYKDNVFIKSIPLPYEEYPPKVRRVLREVRDIHRDLTGFGRFVFQYFGEVEKAHNYRLHWTLPTLHLFDVDIANEVDKILGMLD.

Belongs to the UPF0128 family.

This Pyrococcus abyssi (strain GE5 / Orsay) protein is UPF0128 protein PYRAB08320.